A 361-amino-acid polypeptide reads, in one-letter code: NudC domain-containing protein 3 (361 aa).

Basic and acidic residues predominate over residues 87-97 (KIRRKEEEEAK). Disordered stretches follow at residues 87–106 (KIRRKEEEEAKTVSAAAAEK) and 124–158 (LDGHQEVEKVQPPGPVKEMAHGSQEAEAPGAVAGA). Ser-146 is modified (phosphoserine). Over residues 148 to 158 (EAEAPGAVAGA) the composition is skewed to low complexity. Positions 185–277 (AVRENYTWSQ…VGEYWWNAIL (93 aa)) constitute a CS domain. Residues Ser-340 and Ser-355 each carry the phosphoserine modification.

In Homo sapiens (Human), this protein is NudC domain-containing protein 3 (NUDCD3).